Here is a 201-residue protein sequence, read N- to C-terminus: Molybdenum cofactor guanylyltransferase (201 aa).

GTP contacts are provided by residues 14–16 (LAG), K31, and D104. D104 is a binding site for Mg(2+).

It belongs to the MobA family. In terms of assembly, monomer. It depends on Mg(2+) as a cofactor.

It is found in the cytoplasm. It carries out the reaction Mo-molybdopterin + GTP + H(+) = Mo-molybdopterin guanine dinucleotide + diphosphate. Functionally, transfers a GMP moiety from GTP to Mo-molybdopterin (Mo-MPT) cofactor (Moco or molybdenum cofactor) to form Mo-molybdopterin guanine dinucleotide (Mo-MGD) cofactor. The sequence is that of Molybdenum cofactor guanylyltransferase from Helicobacter pylori (strain ATCC 700392 / 26695) (Campylobacter pylori).